The sequence spans 212 residues: Protein-L-isoaspartate O-methyltransferase (212 aa).

Residue Ser60 is part of the active site.

Belongs to the methyltransferase superfamily. L-isoaspartyl/D-aspartyl protein methyltransferase family.

The protein resides in the cytoplasm. The enzyme catalyses [protein]-L-isoaspartate + S-adenosyl-L-methionine = [protein]-L-isoaspartate alpha-methyl ester + S-adenosyl-L-homocysteine. Functionally, catalyzes the methyl esterification of L-isoaspartyl residues in peptides and proteins that result from spontaneous decomposition of normal L-aspartyl and L-asparaginyl residues. It plays a role in the repair and/or degradation of damaged proteins. This chain is Protein-L-isoaspartate O-methyltransferase, found in Methylorubrum populi (strain ATCC BAA-705 / NCIMB 13946 / BJ001) (Methylobacterium populi).